A 748-amino-acid polypeptide reads, in one-letter code: Bifunctional lysine-specific demethylase and histidyl-hydroxylase NO66 (748 aa).

2 disordered regions span residues 65-135 (NIDR…RSTY) and 160-264 (TEVV…DDEG). Positions 94–110 (LENKKPKVEVKKEDEKS) are enriched in basic and acidic residues. The segment covering 124 to 134 (LVQNETSTRST) has biased composition (polar residues). Residues 163-193 (VESDDEQMIGLDSDEELEDEDETDIDEDEMM) are compositionally biased toward acidic residues. The span at 194 to 203 (IDPKDIERYI) shows a compositional bias: basic and acidic residues. A compositionally biased stretch (acidic residues) spans 207 to 264 (SVEDEEDMEDEEIEDEEFEDEEFEDEEEEADEQEEEEEDVSDEESVVSEMDADSDDEG). The 145-residue stretch at 399–543 (QLVNPQTYDD…NLMEKVVPEA (145 aa)) folds into the JmjC domain. The Fe cation site is built by His-442, Asp-444, and His-509.

The protein belongs to the ROX family. NO66 subfamily. Fe(2+) serves as cofactor.

The protein localises to the nucleus. The catalysed reaction is N(6),N(6)-dimethyl-L-lysyl(36)-[histone H3] + 2 2-oxoglutarate + 2 O2 = L-lysyl(36)-[histone H3] + 2 formaldehyde + 2 succinate + 2 CO2. Functionally, oxygenase that can act as both a histone lysine demethylase and a ribosomal histidine hydroxylase. Specifically demethylates 'Lys-4' (H3K4me) and 'Lys-36' (H3K36me) of histone H3, thereby playing a central role in histone code. Mediates response to multiple stress stimuli, including heat shock and osmotic, oxidative, and ethanol stress. The polypeptide is Bifunctional lysine-specific demethylase and histidyl-hydroxylase NO66 (jmjc-1) (Caenorhabditis elegans).